Consider the following 387-residue polypeptide: 3-ketoacyl-CoA thiolase (387 aa).

Cys-91 functions as the Acyl-thioester intermediate in the catalytic mechanism. Catalysis depends on proton acceptor residues His-343 and Cys-373.

The protein belongs to the thiolase-like superfamily. Thiolase family. As to quaternary structure, heterotetramer of two alpha chains (FadB) and two beta chains (FadA).

The protein resides in the cytoplasm. It catalyses the reaction an acyl-CoA + acetyl-CoA = a 3-oxoacyl-CoA + CoA. Its pathway is lipid metabolism; fatty acid beta-oxidation. Its function is as follows. Catalyzes the final step of fatty acid oxidation in which acetyl-CoA is released and the CoA ester of a fatty acid two carbons shorter is formed. The polypeptide is 3-ketoacyl-CoA thiolase (Aeromonas hydrophila subsp. hydrophila (strain ATCC 7966 / DSM 30187 / BCRC 13018 / CCUG 14551 / JCM 1027 / KCTC 2358 / NCIMB 9240 / NCTC 8049)).